The following is a 477-amino-acid chain: Cysteine--tRNA ligase (477 aa).

Cysteine 34 is a Zn(2+) binding site. The short motif at 36-46 (PTVYDFAHIGN) is the 'HIGH' region element. The Zn(2+) site is built by cysteine 235, histidine 260, and glutamate 264. Residues 293-297 (KMSKS) carry the 'KMSKS' region motif. Lysine 296 serves as a coordination point for ATP.

The protein belongs to the class-I aminoacyl-tRNA synthetase family. In terms of assembly, monomer. The cofactor is Zn(2+).

The protein resides in the cytoplasm. The enzyme catalyses tRNA(Cys) + L-cysteine + ATP = L-cysteinyl-tRNA(Cys) + AMP + diphosphate. This Mesorhizobium japonicum (strain LMG 29417 / CECT 9101 / MAFF 303099) (Mesorhizobium loti (strain MAFF 303099)) protein is Cysteine--tRNA ligase.